An 830-amino-acid chain; its full sequence is P-selectin (830 aa).

The signal sequence occupies residues 1–41 (MANCQIAILYQRFQRVVFGISQLLCFSALISELTNQKEVAA). Topologically, residues 42–771 (WTYHYSTKAY…QAGPLTIQEA (730 aa)) are extracellular. Residues Asn-54 and Asn-98 are each glycosylated (N-linked (GlcNAc...) asparagine). The region spanning 58–158 (KYCQNRYTDL…HCLKKKHALC (101 aa)) is the C-type lectin domain. 23 disulfides stabilise this stretch: Cys-60-Cys-158, Cys-131-Cys-150, Cys-163-Cys-174, Cys-168-Cys-183, Cys-185-Cys-194, Cys-200-Cys-244, Cys-230-Cys-257, Cys-262-Cys-306, Cys-292-Cys-319, Cys-324-Cys-368, Cys-354-Cys-381, Cys-386-Cys-430, Cys-416-Cys-443, Cys-448-Cys-492, Cys-478-Cys-505, Cys-510-Cys-554, Cys-540-Cys-567, Cys-572-Cys-616, Cys-602-Cys-629, Cys-642-Cys-686, Cys-672-Cys-699, Cys-704-Cys-748, and Cys-734-Cys-761. Positions 121, 123, and 124 each coordinate Ca(2+). Asn-123 provides a ligand contact to a carbohydrate. Positions 133 and 146 each coordinate a carbohydrate. Ca(2+) is bound by residues Asn-146 and Asp-147. In terms of domain architecture, EGF-like spans 159 to 195 (YTASCQDMSCSKQGECLETIGNYTCSCYPGFYGPECE). Asn-180 carries an N-linked (GlcNAc...) asparagine glycan. 9 consecutive Sushi domains span residues 198–259 (RECG…QCLA), 260–321 (AQCP…VCKA), 322–383 (VQCQ…TCEA), 384–445 (ISCE…VCQA), 446–507 (LQCQ…ECQA), 508–569 (IPCT…MCEA), 570–631 (IKCP…TCKG), 640–701 (VQCP…ACRA), and 702–763 (VKCS…TCQA). N-linked (GlcNAc...) asparagine glycans are attached at residues Asn-212 and Asn-219. Residue Asn-411 is glycosylated (N-linked (GlcNAc...) asparagine). The N-linked (GlcNAc...) asparagine glycan is linked to Asn-460. N-linked (GlcNAc...) asparagine glycosylation is present at Asn-518. Residue Asn-665 is glycosylated (N-linked (GlcNAc...) asparagine). N-linked (GlcNAc...) asparagine glycans are attached at residues Asn-716, Asn-723, and Asn-741. A helical transmembrane segment spans residues 772–795 (LTYFGGAVASTIGLIMGGTLLALL). Residues 796–830 (RKRFRQKDDGKCPLNPHSHLGTYGVFTNAAFDPSP) are Cytoplasmic-facing. Residue Cys-807 is the site of S-palmitoyl cysteine; alternate attachment. Residue Cys-807 is the site of S-stearoyl cysteine; alternate attachment. The Endocytosis signal motif lies at 818-821 (YGVF). Positions 821 to 830 (FTNAAFDPSP) are interaction with SNX17.

It belongs to the selectin/LECAM family. As to quaternary structure, interacts with SNX17. Interacts with SELPLG/PSGL1 and PODXL2 and mediates neutrophil adhesion and leukocyte rolling. This interaction requires the sialyl-Lewis X epitope of SELPLG and PODXL2, and specific tyrosine sulfation on SELPLG. Interacts (via C-type lectin domain) with alpha-IIb/beta3 integrin ITGA2B:ITGB3 and alpha-V/beta-3 integrin ITGAV:ITGB3. Interacts with alpha5/beta1 integrin ITGA5:ITGB1 and alpha4/beta1 integrin ITGA4:ITGB. As to expression, stored in the alpha-granules of platelets and Weibel-Palade bodies of endothelial cells. Upon cell activation by agonists, P-selectin is transported rapidly to the cell surface.

It localises to the cell membrane. Ca(2+)-dependent receptor for myeloid cells that binds to carbohydrates on neutrophils and monocytes. Mediates the interaction of activated endothelial cells or platelets with leukocytes. The ligand recognized is sialyl-Lewis X. Mediates rapid rolling of leukocyte rolling over vascular surfaces during the initial steps in inflammation through interaction with SELPLG. Mediates cell-cell interactions and cell adhesion via the interaction with integrin alpha-IIb/beta3 (ITGA2B:ITGB3) and integrin alpha-V/beta-3 (ITGAV:ITGB3). This is P-selectin (SELP) from Homo sapiens (Human).